A 212-amino-acid chain; its full sequence is Deoxyribose-phosphate aldolase (212 aa).

D89 (proton donor/acceptor) is an active-site residue. K151 functions as the Schiff-base intermediate with acetaldehyde in the catalytic mechanism. K180 functions as the Proton donor/acceptor in the catalytic mechanism.

The protein belongs to the DeoC/FbaB aldolase family. DeoC type 1 subfamily.

Its subcellular location is the cytoplasm. It carries out the reaction 2-deoxy-D-ribose 5-phosphate = D-glyceraldehyde 3-phosphate + acetaldehyde. It participates in carbohydrate degradation; 2-deoxy-D-ribose 1-phosphate degradation; D-glyceraldehyde 3-phosphate and acetaldehyde from 2-deoxy-alpha-D-ribose 1-phosphate: step 2/2. Catalyzes a reversible aldol reaction between acetaldehyde and D-glyceraldehyde 3-phosphate to generate 2-deoxy-D-ribose 5-phosphate. The chain is Deoxyribose-phosphate aldolase from Clostridium botulinum (strain ATCC 19397 / Type A).